The chain runs to 324 residues: Carbamate kinase (324 aa).

Belongs to the carbamate kinase family.

It localises to the cytoplasm. It carries out the reaction hydrogencarbonate + NH4(+) + ATP = carbamoyl phosphate + ADP + H2O + H(+). The protein operates within amino-acid degradation; L-arginine degradation via ADI pathway. This is Carbamate kinase from Rhizobium meliloti (strain 1021) (Ensifer meliloti).